A 133-amino-acid chain; its full sequence is Glycine cleavage system H protein (133 aa).

In terms of domain architecture, Lipoyl-binding spans 24–106 (IATIGISAYA…YGDGWLLKVR (83 aa)). Lys-65 bears the N6-lipoyllysine mark.

Belongs to the GcvH family. As to quaternary structure, the glycine cleavage system is composed of four proteins: P, T, L and H. (R)-lipoate is required as a cofactor.

The glycine cleavage system catalyzes the degradation of glycine. The H protein shuttles the methylamine group of glycine from the P protein to the T protein. In Crocosphaera subtropica (strain ATCC 51142 / BH68) (Cyanothece sp. (strain ATCC 51142)), this protein is Glycine cleavage system H protein.